The chain runs to 61 residues: Metallothionein-1A (61 aa).

Residue Met-1 is modified to N-acetylmethionine. Residues 1-29 (MDPNCSCATGGSCTCTGSCKCKECKCTSC) form a beta region. A divalent metal cation-binding residues include Cys-5, Cys-7, Cys-13, Cys-15, Cys-19, Cys-21, Cys-24, Cys-26, Cys-29, Cys-33, Cys-34, Cys-36, Cys-37, Cys-41, Cys-44, Cys-48, Cys-50, and Cys-57. Positions 30-61 (KKSCCSCCPMSCAKCAQGCICKGASEKCSCCA) are alpha. Residue Ser-58 is modified to Phosphoserine. Cys-59 and Cys-60 together coordinate a divalent metal cation.

This sequence belongs to the metallothionein superfamily. Type 1 family. Monomer.

Its function is as follows. Metallothioneins have a high content of cysteine residues that bind various heavy metals; these proteins are transcriptionally regulated by both heavy metals and glucocorticoids. The sequence is that of Metallothionein-1A (MT1A) from Homo sapiens (Human).